The sequence spans 91 residues: MKHVLTLLALASVFAVSNQALAYDGQNCKEPGNCWENKPGYPEKIAGSKYDPKHDPVELNKQEESIKAMDARNAKRIANAKSSGNFVFDVK.

A signal peptide spans 1 to 22 (MKHVLTLLALASVFAVSNQALA). Cys28 and Cys34 are disulfide-bonded.

It belongs to the methanol dehydrogenase subunit 2 family. In terms of assembly, heterotetramer composed of 2 alpha and 2 beta subunits.

It localises to the cell inner membrane. It catalyses the reaction 2 Fe(III)-[cytochrome cL] + a primary alcohol = 2 Fe(II)-[cytochrome cL] + an aldehyde + 2 H(+). In terms of biological role, catalyzes the oxidation of primary alcohols including methanol. This is Methanol dehydrogenase [cytochrome c] subunit 2 (moxI) from Methylophilus methylotrophus (Bacterium W3A1).